Consider the following 200-residue polypeptide: UPF0637 protein LCABL_14170 (200 aa).

The protein belongs to the UPF0637 family.

The polypeptide is UPF0637 protein LCABL_14170 (Lacticaseibacillus casei (strain BL23) (Lactobacillus casei)).